The chain runs to 31 residues: Cytochrome b6-f complex subunit 6 (31 aa).

A helical membrane pass occupies residues 4-26 (ITSYFGFLLAALTVTSALFIGLS).

Belongs to the PetL family. In terms of assembly, the 4 large subunits of the cytochrome b6-f complex are cytochrome b6, subunit IV (17 kDa polypeptide, PetD), cytochrome f and the Rieske protein, while the 4 small subunits are PetG, PetL, PetM and PetN. The complex functions as a dimer.

It localises to the plastid. The protein resides in the chloroplast thylakoid membrane. Its function is as follows. Component of the cytochrome b6-f complex, which mediates electron transfer between photosystem II (PSII) and photosystem I (PSI), cyclic electron flow around PSI, and state transitions. PetL is important for photoautotrophic growth as well as for electron transfer efficiency and stability of the cytochrome b6-f complex. This chain is Cytochrome b6-f complex subunit 6, found in Daucus carota (Wild carrot).